The following is a 31-amino-acid chain: Cytochrome b6-f complex subunit 6 (31 aa).

Residues 4–24 traverse the membrane as a helical segment; it reads ITSYFGFLLAALTITSAIFIG.

This sequence belongs to the PetL family. The 4 large subunits of the cytochrome b6-f complex are cytochrome b6, subunit IV (17 kDa polypeptide, PetD), cytochrome f and the Rieske protein, while the 4 small subunits are PetG, PetL, PetM and PetN. The complex functions as a dimer.

It is found in the plastid. The protein resides in the chloroplast thylakoid membrane. In terms of biological role, component of the cytochrome b6-f complex, which mediates electron transfer between photosystem II (PSII) and photosystem I (PSI), cyclic electron flow around PSI, and state transitions. PetL is important for photoautotrophic growth as well as for electron transfer efficiency and stability of the cytochrome b6-f complex. The sequence is that of Cytochrome b6-f complex subunit 6 from Ficus carica (Common fig).